We begin with the raw amino-acid sequence, 95 residues long: UPF0045 protein CPE1503 (95 aa).

This sequence belongs to the UPF0045 family.

In Clostridium perfringens (strain 13 / Type A), this protein is UPF0045 protein CPE1503.